We begin with the raw amino-acid sequence, 299 residues long: MAKWGQGNPHWIVEEREDGTNVNNWRWTERDATSLSKGKFQELLVGIVVENDAGRGEINELKQVEGEASCSSRKGKLIFFYEWNIKLGWKGIVKESGVKHKGLIEIPNLSEENEVDDTEVSLSKKKGDGVILKDLMKTAGTAKVREALGDYLKALKTEFTTGMILPTKAMATQELTVKRKLSGNTLQVQASSPVALGVRIPTVALHMMELFDTTVEQLYSIFTVKELTNKKIIMKWRCGNWPEEHYAMVALNFVPTLGQTELQLKEFLSICKEENMKFCWQKQHFEEIKGSLQLTPLNG.

The protein belongs to the AHA1 family.

Co-chaperone that stimulates HSP90 ATPase activity. This Homo sapiens (Human) protein is Putative activator of 90 kDa heat shock protein ATPase homolog 2.